Here is a 389-residue protein sequence, read N- to C-terminus: (S)-8-oxocitronellyl enol synthase CYC1 (389 aa).

NADP(+)-binding positions include 34-36, 62-63, 80-81, 104-105, and Gln-138; these read TGI, RR, DV, and AW. Catalysis depends on residues Lys-142 and Tyr-174. Substrate contacts are provided by Lys-142 and Tyr-174. Residues Tyr-174, Val-201, and 208–210 contribute to the NADP(+) site; that span reads SMM. Ser-350 provides a ligand contact to substrate.

This sequence belongs to the short-chain dehydrogenases/reductases (SDR) family. Highly divergent.

The catalysed reaction is (S)-8-oxocitronellyl enol + NADP(+) = (6E)-8-oxogeranial + NADPH + H(+). The enzyme catalyses (S)-8-oxocitronellyl enol + NAD(+) = (6E)-8-oxogeranial + NADH + H(+). Iridoid synthase that catalyzes the first step in generation of the iridoid ring scaffold using the linear monoterpene (6E)-8-oxogeranial as substrate. Iridoids comprise a large family of distinctive bicyclic monoterpenes that possess a wide range of pharmacological activities, including anticancer, anti-inflammatory, antifungal and antibacterial activities. In Camptotheca acuminata (Happy tree), this protein is (S)-8-oxocitronellyl enol synthase CYC1.